The sequence spans 2083 residues: Non-reducing polyketide synthase curS2 (2083 aa).

Residues 9 to 246 (LLFGDVTDPW…NELDIHALQH (238 aa)) form an N-terminal acylcarrier protein transacylase domain (SAT) region. Residues 366 to 798 (RDGIAIVGMA…GGNACLLLED (433 aa)) form the Ketosynthase family 3 (KS3) domain. Catalysis depends on for beta-ketoacyl synthase activity residues Cys543, His678, and His717. Residues 895-1201 (VFVFTGQGSH…THTLQPNTHN (307 aa)) are malonyl-CoA:ACP transacylase (MAT) domain. Ser986 serves as the catalytic For acyl/malonyl transferase activity. The N-terminal hotdog fold stretch occupies residues 1276-1415 (AQYLVSKSSS…DPAKTQADWD (140 aa)). In terms of domain architecture, PKS/mFAS DH spans 1276–1585 (AQYLVSKSSS…YQELPRVTWK (310 aa)). A product template (PT) domain region spans residues 1285–1581 (SPKVQVVFRA…IDLRYQELPR (297 aa)). The segment at 1437 to 1585 (GHRMQPEVFY…YQELPRVTWK (149 aa)) is C-terminal hotdog fold. Residues 1637–1714 (DFDEGLVDAI…DLRRAFGANK (78 aa)) form the Carrier domain. Ser1674 bears the O-(pantetheine 4'-phosphoryl)serine mark. Positions 1710-1790 (FGANKPKTSK…KMDETDTSPA (81 aa)) are disordered. The span at 1718-1736 (SKPQPGSTTPSSSQSSIPS) shows a compositional bias: low complexity. Polar residues predominate over residues 1745 to 1754 (MSDTASSLGS). Basic and acidic residues predominate over residues 1771–1784 (LEPKPNHHLGKMDE). The interval 1811–2058 (MMADGTGTIA…LSVAGDHLDL (248 aa)) is thioesterase (TE) domain. His2065 serves as the catalytic For thioesterase activity.

Its pathway is mycotoxin biosynthesis. Its function is as follows. Non-reducing polyketide synthase; part of the gene cluster that mediates the biosynthesis of 10,11-dehydrocurvularin, a prevalent fungal phytotoxin with heat shock response and immune-modulatory activities. The highly reducing polyketide synthase curS1 is responsible for biosynthesis up to the tetraketide stage. The non-reducing polyketide synthase curS2 then conducts four additional chain extension cycles, producing the unreduced part of the nascent octaketide from C-1 to C-8 in 10,11-dehydrocurvularin. In Aspergillus terreus, this protein is Non-reducing polyketide synthase curS2.